The primary structure comprises 102 residues: Small ribosomal subunit protein uS10 (102 aa).

It belongs to the universal ribosomal protein uS10 family. Part of the 30S ribosomal subunit.

In terms of biological role, involved in the binding of tRNA to the ribosomes. This Rhodospirillum centenum (strain ATCC 51521 / SW) protein is Small ribosomal subunit protein uS10.